A 249-amino-acid chain; its full sequence is tRNA (guanine-N(1)-)-methyltransferase (249 aa).

S-adenosyl-L-methionine contacts are provided by residues glycine 121 and leucine 141–leucine 146.

This sequence belongs to the RNA methyltransferase TrmD family. As to quaternary structure, homodimer.

Its subcellular location is the cytoplasm. The enzyme catalyses guanosine(37) in tRNA + S-adenosyl-L-methionine = N(1)-methylguanosine(37) in tRNA + S-adenosyl-L-homocysteine + H(+). Its function is as follows. Specifically methylates guanosine-37 in various tRNAs. This chain is tRNA (guanine-N(1)-)-methyltransferase, found in Cereibacter sphaeroides (strain KD131 / KCTC 12085) (Rhodobacter sphaeroides).